The chain runs to 654 residues: NADPH-dependent diflavin oxidoreductase 1 (654 aa).

A compositionally biased stretch (low complexity) spans 1-10 (MSGSQSSGSP). The interval 1–22 (MSGSQSSGSPGSPGPPGPPGRS) is disordered. The Flavodoxin-like domain occupies 23–167 (ALVVYGSETG…TFIPWLAGFR (145 aa)). Residues 29-34 (SETGNA), 76-79 (STTG), and 114-123 (LGDSSYPKFN) each bind FMN. The region spanning 235–485 (HDSLTATLVQ…QLQRGGLNSS (251 aa)) is the FAD-binding FR-type domain. Residues Arg-389, 419 to 422 (RQFS), and 458 to 461 (GVCT) contribute to the FAD site. NADP(+) contacts are provided by residues Thr-500, 568-569 (SR), and 574-578 (KVYVQ). Trp-654 serves as a coordination point for FAD.

It belongs to the NADPH-dependent diflavin oxidoreductase NDOR1 family. In the N-terminal section; belongs to the flavodoxin family. The protein in the C-terminal section; belongs to the flavoprotein pyridine nucleotide cytochrome reductase family. Interacts with dre2; as part of the cytosolic iron-sulfur (Fe-S) protein assembly (CIA) machinery. FAD is required as a cofactor. FMN serves as cofactor.

Its subcellular location is the cytoplasm. The protein resides in the mitochondrion. It carries out the reaction 2 oxidized [2Fe-2S]-[protein] + NADPH = 2 reduced [2Fe-2S]-[protein] + NADP(+) + H(+). Functionally, NADPH-dependent reductase which is a central component of the cytosolic iron-sulfur (Fe-S) protein assembly (CIA) machinery. Transfers electrons from NADPH via its FAD and FMN prosthetic groups to the [2Fe-2S] cluster of dre2, another key component of the CIA machinery. In turn, this reduced cluster provides electrons for assembly of cytosolic iron-sulfur cluster proteins. Positively controls H(2)O(2)-induced cell death. The sequence is that of NADPH-dependent diflavin oxidoreductase 1 from Emericella nidulans (strain FGSC A4 / ATCC 38163 / CBS 112.46 / NRRL 194 / M139) (Aspergillus nidulans).